A 340-amino-acid polypeptide reads, in one-letter code: Glyceraldehyde-3-phosphate dehydrogenase (340 aa).

NAD(+) is bound by residues serine 11–isoleucine 12 and glycine 111. Residue serine 140–asparagine 142 coordinates D-glyceraldehyde 3-phosphate. Residue cysteine 141 is the Nucleophile of the active site. Arginine 169 contacts NAD(+). Histidine 195–glycine 196 is a D-glyceraldehyde 3-phosphate binding site. Glutamine 303 provides a ligand contact to NAD(+).

It belongs to the glyceraldehyde-3-phosphate dehydrogenase family. In terms of assembly, homotetramer.

Its subcellular location is the cytoplasm. The enzyme catalyses D-glyceraldehyde 3-phosphate + phosphate + NADP(+) = (2R)-3-phospho-glyceroyl phosphate + NADPH + H(+). The catalysed reaction is D-glyceraldehyde 3-phosphate + phosphate + NAD(+) = (2R)-3-phospho-glyceroyl phosphate + NADH + H(+). Its pathway is carbohydrate degradation; glycolysis; pyruvate from D-glyceraldehyde 3-phosphate: step 1/5. The protein is Glyceraldehyde-3-phosphate dehydrogenase of Methanococcus maripaludis (strain C5 / ATCC BAA-1333).